The chain runs to 600 residues: MKYVLVSGGVISGIGKGVIASSTGLLLKTLGLKVTSIKIDPYMNIDAGTMSPLEHGEVFVLNDGGEVDLDLGNYERYLNVTLTHDNNITTGKVYSNVIQKERRGDYLGKTVQIVPHVTNEIQDWVERVARIPVDQSGEEPDVCIVELGGTVGDIESAAFVEAMRQFQFRVGHENFVSIHVSLVPVINGEQKTKPTQQAIRDLRSLGITPDLIACRCKQPLEKSVIDKISLFCHVGPEQVLAVHDVSSTYHVPQLLEDKLLEYLKIRFALDKISVSRELALAGENMWSSWKHLTQGYDHLFKKVTIVLVGKYTHLQDSYISVIKALEHSAMRCGRKLDLQWVEASHLEASTNTSDPLSYHKAWHLVCSANGILVPGGFGSRGVEGMIAAAKWARENNTPYLGICLGMQVAVIEFARSVCGIEGAFSEEFDKECENNVVVYMPEIDKDKLGGTMRLGLRPTFFQPNSEWSKLRKLHKMVDEVLERHRHRYEINPAFVSRLEQGGISFIGKDERGERMEIIEKRDHPYFVGVQYHPEYLSKPLKPSPPIFGLVAASAGLLDEFIQSGEEVEWSNFSHFNAESALADMNDSVEVTEEATVVTIS.

Residues 304-570 enclose the Glutamine amidotransferase type-1 domain; sequence TIVLVGKYTH…IQSGEEVEWS (267 aa). Catalysis depends on for GATase activity residues Cys403, His532, and Glu534.

The protein belongs to the CTP synthase family.

The catalysed reaction is UTP + L-glutamine + ATP + H2O = CTP + L-glutamate + ADP + phosphate + 2 H(+). It functions in the pathway pyrimidine metabolism; CTP biosynthesis via de novo pathway; CTP from UDP: step 2/2. Catalyzes the ATP-dependent amination of UTP to CTP with either L-glutamine or ammonia as the source of nitrogen. The chain is CTP synthase (ura7) from Schizosaccharomyces pombe (strain 972 / ATCC 24843) (Fission yeast).